Reading from the N-terminus, the 353-residue chain is tRNA-cytidine(32) 2-sulfurtransferase (353 aa).

The PP-loop motif motif lies at 49 to 54 (SGGKDS). 3 residues coordinate [4Fe-4S] cluster: Cys124, Cys127, and Cys215.

It belongs to the TtcA family. Homodimer. Requires Mg(2+) as cofactor. [4Fe-4S] cluster is required as a cofactor.

It is found in the cytoplasm. It catalyses the reaction cytidine(32) in tRNA + S-sulfanyl-L-cysteinyl-[cysteine desulfurase] + AH2 + ATP = 2-thiocytidine(32) in tRNA + L-cysteinyl-[cysteine desulfurase] + A + AMP + diphosphate + H(+). It functions in the pathway tRNA modification. Functionally, catalyzes the ATP-dependent 2-thiolation of cytidine in position 32 of tRNA, to form 2-thiocytidine (s(2)C32). The sulfur atoms are provided by the cysteine/cysteine desulfurase (IscS) system. In Sodalis glossinidius (strain morsitans), this protein is tRNA-cytidine(32) 2-sulfurtransferase.